A 789-amino-acid chain; its full sequence is Ribonucleoside-diphosphate reductase large subunit (789 aa).

Substrate-binding positions include T207, 222 to 223 (SC), G253, 435 to 439 (NLCTE), and 620 to 624 (PTVSS). C223 and C452 are disulfide-bonded. Catalysis depends on N435, which acts as the Proton acceptor. C437 acts as the Cysteine radical intermediate in catalysis. Residue E439 is the Proton acceptor of the active site.

Belongs to the ribonucleoside diphosphate reductase large chain family. Heterotetramer composed of a homodimer of the large subunit (R1) and a homodimer of the small subunit (R2). Larger multisubunit protein complex are also active, composed of (R1)n(R2)n.

It carries out the reaction a 2'-deoxyribonucleoside 5'-diphosphate + [thioredoxin]-disulfide + H2O = a ribonucleoside 5'-diphosphate + [thioredoxin]-dithiol. In terms of biological role, ribonucleoside-diphosphate reductase holoenzyme provides the precursors necessary for viral DNA synthesis. Allows virus growth in non-dividing cells, as well as reactivation from latency in infected hosts. Catalyzes the biosynthesis of deoxyribonucleotides from the corresponding ribonucleotides. This is Ribonucleoside-diphosphate reductase large subunit from Equus caballus (Horse).